The primary structure comprises 335 residues: Syntaxin-18 (335 aa).

The Cytoplasmic portion of the chain corresponds to 1-309 (MAVDITLLFR…EDIREAIKNN (309 aa)). 2 stretches are compositionally biased toward basic and acidic residues: residues 168–182 (KLEP…ESTS) and 192–208 (KDSE…EKIL). Residues 168–226 (KLEPEPNTKTRESTSSEKVSQSPSKDSEENPATEERPEKILAETQPELGTWGDGKGEDE) form a disordered region. Positions 243–305 (IGEMNSLFDE…KEGNEDIREA (63 aa)) constitute a t-SNARE coiled-coil homology domain. A helical; Anchor for type IV membrane protein transmembrane segment spans residues 310 to 330 (AGFRVWILFFLVMCSFSLLFL). The Vesicular portion of the chain corresponds to 331-335 (DWYDS).

This sequence belongs to the syntaxin family. Component of a SNARE complex consisting of STX18, USE1L, BNIP1/SEC20L, and SEC22B. RINT1/TIP20L and ZW10 are associated with the complex through interaction with BNIP1/SEC20L. Interacts directly with USE1L and BNIP1/SEC20L. As to expression, ubiquitous.

Its subcellular location is the endoplasmic reticulum membrane. The protein resides in the golgi apparatus membrane. Functionally, syntaxin that may be involved in targeting and fusion of Golgi-derived retrograde transport vesicles with the ER. The polypeptide is Syntaxin-18 (STX18) (Homo sapiens (Human)).